Consider the following 540-residue polypeptide: tRNA-2-methylthio-N(6)-dimethylallyladenosine synthase (540 aa).

The MTTase N-terminal domain maps to 41 to 157 (RTYEVRTFGC…LPTLLERSAH (117 aa)). 6 residues coordinate [4Fe-4S] cluster: Cys-50, Cys-86, Cys-120, Cys-194, Cys-198, and Cys-201. Residues 180–416 (RESAYSGWVS…IALQERIQAE (237 aa)) form the Radical SAM core domain. A TRAM domain is found at 419–486 (KELVGTTQEL…PFFLIADGPL (68 aa)).

This sequence belongs to the methylthiotransferase family. MiaB subfamily. As to quaternary structure, monomer. Requires [4Fe-4S] cluster as cofactor.

The protein localises to the cytoplasm. It carries out the reaction N(6)-dimethylallyladenosine(37) in tRNA + (sulfur carrier)-SH + AH2 + 2 S-adenosyl-L-methionine = 2-methylsulfanyl-N(6)-dimethylallyladenosine(37) in tRNA + (sulfur carrier)-H + 5'-deoxyadenosine + L-methionine + A + S-adenosyl-L-homocysteine + 2 H(+). Its function is as follows. Catalyzes the methylthiolation of N6-(dimethylallyl)adenosine (i(6)A), leading to the formation of 2-methylthio-N6-(dimethylallyl)adenosine (ms(2)i(6)A) at position 37 in tRNAs that read codons beginning with uridine. The chain is tRNA-2-methylthio-N(6)-dimethylallyladenosine synthase from Corynebacterium urealyticum (strain ATCC 43042 / DSM 7109).